Here is a 143-residue protein sequence, read N- to C-terminus: Transcriptional regulator MraZ (143 aa).

SpoVT-AbrB domains are found at residues 5–47 (EYQH…PQEE) and 76–119 (ASEC…SKSE).

This sequence belongs to the MraZ family. In terms of assembly, forms oligomers.

It localises to the cytoplasm. Its subcellular location is the nucleoid. The polypeptide is Transcriptional regulator MraZ (Listeria monocytogenes serotype 4b (strain CLIP80459)).